A 200-amino-acid chain; its full sequence is Peptidyl-tRNA hydrolase (200 aa).

A tRNA-binding site is contributed by Y15. H20 serves as the catalytic Proton acceptor. TRNA contacts are provided by F66, N68, and N114.

This sequence belongs to the PTH family. Monomer.

Its subcellular location is the cytoplasm. It carries out the reaction an N-acyl-L-alpha-aminoacyl-tRNA + H2O = an N-acyl-L-amino acid + a tRNA + H(+). In terms of biological role, hydrolyzes ribosome-free peptidyl-tRNAs (with 1 or more amino acids incorporated), which drop off the ribosome during protein synthesis, or as a result of ribosome stalling. Its function is as follows. Catalyzes the release of premature peptidyl moieties from peptidyl-tRNA molecules trapped in stalled 50S ribosomal subunits, and thus maintains levels of free tRNAs and 50S ribosomes. The protein is Peptidyl-tRNA hydrolase of Ralstonia nicotianae (strain ATCC BAA-1114 / GMI1000) (Ralstonia solanacearum).